Consider the following 347-residue polypeptide: S-adenosylmethionine:tRNA ribosyltransferase-isomerase (347 aa).

This sequence belongs to the QueA family. Monomer.

The protein resides in the cytoplasm. The enzyme catalyses 7-aminomethyl-7-carbaguanosine(34) in tRNA + S-adenosyl-L-methionine = epoxyqueuosine(34) in tRNA + adenine + L-methionine + 2 H(+). The protein operates within tRNA modification; tRNA-queuosine biosynthesis. In terms of biological role, transfers and isomerizes the ribose moiety from AdoMet to the 7-aminomethyl group of 7-deazaguanine (preQ1-tRNA) to give epoxyqueuosine (oQ-tRNA). This Gluconobacter oxydans (strain 621H) (Gluconobacter suboxydans) protein is S-adenosylmethionine:tRNA ribosyltransferase-isomerase.